Here is a 503-residue protein sequence, read N- to C-terminus: Sarpagan bridge enzyme 1 (503 aa).

Residues isoleucine 3 to threonine 23 form a helical; Signal-anchor for type II membrane protein membrane-spanning segment. Position 442 (cysteine 442) interacts with heme.

This sequence belongs to the cytochrome P450 family. Heme serves as cofactor. In terms of tissue distribution, highly expressed in roots. Expressed at low levels in leaves, stems and flowers.

It localises to the endoplasmic reticulum membrane. The enzyme catalyses (19E)-geissoschizine + reduced [NADPH--hemoprotein reductase] + O2 = polyneuridine aldehyde + oxidized [NADPH--hemoprotein reductase] + 2 H2O + H(+). It catalyses the reaction tetrahydroalstonine + A + reduced [NADPH--hemoprotein reductase] + O2 = alstonine + AH2 + oxidized [NADPH--hemoprotein reductase] + 2 H2O + H(+). It carries out the reaction ajmalicine + A + reduced [NADPH--hemoprotein reductase] + O2 = serpentine + AH2 + oxidized [NADPH--hemoprotein reductase] + 2 H2O + H(+). It participates in alkaloid biosynthesis; ajmaline biosynthesis. Monooxygenase involved in the biosynthesis of ajmaline-type monoterpenoid indole alkaloids (MIAs) natural products, important plant-derived pharmaceuticals used in the therapy of heart disorders. Converts by cyclization the strictosidine-derived geissoschizine to the sarpagan alkaloid polyneuridine aldehyde, precursor of vomilenine, an intermediate chemical in the biosynthesis of ajmaline. Converts by aromatization the tetrahydro-beta-carboline alkaloids tetrahydroalstonine and ajmalicine to the corresponding beta-carboline alkaloids alstonine and serpentine, respectively. The sequence is that of Sarpagan bridge enzyme 1 from Rauvolfia serpentina (Serpentine wood).